The following is a 174-amino-acid chain: Protein CURVATURE THYLAKOID 1B, chloroplastic (174 aa).

Residues 1–20 (MASLSVSSSSTIIDSRAPPS) form a disordered region. The transit peptide at 1–63 (MASLSVSSSS…RKIVRNVVTR (63 aa)) directs the protein to the chloroplast. Position 64 is an N-acetylalanine (A64). At 64–100 (ATTEVGEAPATTTEAETTELPEIVKTAQEAWEKVDDK) the chain is on the stromal side. Residues 101-121 (YAIGSLAFAGVVALWGSAGMI) form a helical membrane-spanning segment. The Lumenal portion of the chain corresponds to 122-126 (SAIDR). Residues 127 to 147 (LPLVPGVLELVGIGYTGWFTY) traverse the membrane as a helical segment. The Stromal portion of the chain corresponds to 148 to 174 (KNLVFKPDREALFEKVKSTYKDILGSS).

This sequence belongs to the CURT family. In terms of assembly, homo- and heterodimers and trimers. Interacts with PSAL. Post-translationally, phosphorylated on either Thr-65 or Thr-66 by a threonine specific thylakoid kinase.

The protein resides in the plastid. It is found in the chloroplast thylakoid membrane. Determines thylakoid architecture by inducing membrane curvature. The sequence is that of Protein CURVATURE THYLAKOID 1B, chloroplastic (CURT1B) from Arabidopsis thaliana (Mouse-ear cress).